A 314-amino-acid chain; its full sequence is NADH-ubiquinone oxidoreductase chain 1 (314 aa).

A run of 8 helical transmembrane segments spans residues 5-25 (IMPLIGSLLLVICVMVGVAFL), 78-98 (FSPVFSLFLSLLIWMCIPYLI), 105-125 (LGVLFFLCCTSLGVYTVMIAG), 152-172 (ALILLSFIFLVGNYNFLSFYF), 176-196 (YVWFIFFCFPLGLVWLASCLA), 227-247 (LIFLAEYSSILFMSMLFVVIF), 251-271 (DIYSFMFFLKLSFISFIFIWV), and 294-314 (LSLNYLFFFVGLKIFFISLLF).

The protein belongs to the complex I subunit 1 family.

It is found in the mitochondrion inner membrane. It catalyses the reaction a ubiquinone + NADH + 5 H(+)(in) = a ubiquinol + NAD(+) + 4 H(+)(out). Its function is as follows. Core subunit of the mitochondrial membrane respiratory chain NADH dehydrogenase (Complex I) that is believed to belong to the minimal assembly required for catalysis. Complex I functions in the transfer of electrons from NADH to the respiratory chain. The immediate electron acceptor for the enzyme is believed to be ubiquinone. This is NADH-ubiquinone oxidoreductase chain 1 (mt:ND1) from Anopheles gambiae (African malaria mosquito).